Here is a 188-residue protein sequence, read N- to C-terminus: Pyridoxal 5'-phosphate synthase subunit PdxT (188 aa).

47 to 49 (GES) provides a ligand contact to L-glutamine. The active-site Nucleophile is the Cys79. L-glutamine contacts are provided by residues Arg106 and 134-135 (IR). Catalysis depends on charge relay system residues His169 and Glu171.

The protein belongs to the glutaminase PdxT/SNO family. In the presence of PdxS, forms a dodecamer of heterodimers. Only shows activity in the heterodimer.

The catalysed reaction is aldehydo-D-ribose 5-phosphate + D-glyceraldehyde 3-phosphate + L-glutamine = pyridoxal 5'-phosphate + L-glutamate + phosphate + 3 H2O + H(+). The enzyme catalyses L-glutamine + H2O = L-glutamate + NH4(+). Its pathway is cofactor biosynthesis; pyridoxal 5'-phosphate biosynthesis. In terms of biological role, catalyzes the hydrolysis of glutamine to glutamate and ammonia as part of the biosynthesis of pyridoxal 5'-phosphate. The resulting ammonia molecule is channeled to the active site of PdxS. The polypeptide is Pyridoxal 5'-phosphate synthase subunit PdxT (Caldicellulosiruptor saccharolyticus (strain ATCC 43494 / DSM 8903 / Tp8T 6331)).